The following is a 150-amino-acid chain: Large ribosomal subunit protein bL9 (150 aa).

Belongs to the bacterial ribosomal protein bL9 family.

Its function is as follows. Binds to the 23S rRNA. The chain is Large ribosomal subunit protein bL9 from Serratia proteamaculans (strain 568).